Here is a 473-residue protein sequence, read N- to C-terminus: Inactive FRIGIDA-like protein 2 (473 aa).

2 coiled-coil regions span residues 3–35 (AAESIAASINQIDEKKQKLKKAFDDLQAHRSLL) and 306–361 (SLKV…RATK). The disordered stretch occupies residues 356–384 (RKRATKFNSPANPQQPQEQKVDNKRPRVA). Polar residues predominate over residues 361–373 (KFNSPANPQQPQE).

The protein belongs to the Frigida family. In terms of tissue distribution, expressed at low levels throughout the plant, with slightly higher expression in developing seeds and the highest expression in pollen.

Its function is as follows. Inactive FRIGIDA-like 2 protein. The protein is Inactive FRIGIDA-like protein 2 (FRL2) of Arabidopsis thaliana (Mouse-ear cress).